Here is a 199-residue protein sequence, read N- to C-terminus: Small ribosomal subunit protein uS4 (199 aa).

An S4 RNA-binding domain is found at 91–153 (ARLDNVVYRM…SKNFVVIKEA (63 aa)).

The protein belongs to the universal ribosomal protein uS4 family. Part of the 30S ribosomal subunit. Contacts protein S5. The interaction surface between S4 and S5 is involved in control of translational fidelity.

Its function is as follows. One of the primary rRNA binding proteins, it binds directly to 16S rRNA where it nucleates assembly of the body of the 30S subunit. Functionally, with S5 and S12 plays an important role in translational accuracy. This Exiguobacterium sibiricum (strain DSM 17290 / CCUG 55495 / CIP 109462 / JCM 13490 / 255-15) protein is Small ribosomal subunit protein uS4.